Reading from the N-terminus, the 393-residue chain is Formate-dependent phosphoribosylglycinamide formyltransferase (393 aa).

N(1)-(5-phospho-beta-D-ribosyl)glycinamide contacts are provided by residues 22–23 (EL) and Glu82. ATP is bound by residues Arg114, Lys155, 160-165 (SSGKGQ), 195-198 (EGFI), and Glu203. Residues 119 to 308 (RLAAEELGLP…EFALHARAIL (190 aa)) form the ATP-grasp domain. Mg(2+) contacts are provided by Glu267 and Glu279. N(1)-(5-phospho-beta-D-ribosyl)glycinamide-binding positions include Asp286, Lys356, and 363-364 (RR).

Belongs to the PurK/PurT family. As to quaternary structure, homodimer.

It catalyses the reaction N(1)-(5-phospho-beta-D-ribosyl)glycinamide + formate + ATP = N(2)-formyl-N(1)-(5-phospho-beta-D-ribosyl)glycinamide + ADP + phosphate + H(+). Its pathway is purine metabolism; IMP biosynthesis via de novo pathway; N(2)-formyl-N(1)-(5-phospho-D-ribosyl)glycinamide from N(1)-(5-phospho-D-ribosyl)glycinamide (formate route): step 1/1. Involved in the de novo purine biosynthesis. Catalyzes the transfer of formate to 5-phospho-ribosyl-glycinamide (GAR), producing 5-phospho-ribosyl-N-formylglycinamide (FGAR). Formate is provided by PurU via hydrolysis of 10-formyl-tetrahydrofolate. This chain is Formate-dependent phosphoribosylglycinamide formyltransferase, found in Pseudomonas aeruginosa (strain LESB58).